The sequence spans 608 residues: Probable Ufm1-specific protease 2 (608 aa).

Catalysis depends on residues Cys441, Asp565, and His567.

This sequence belongs to the peptidase C78 family.

In terms of biological role, thiol protease which recognizes and hydrolyzes the peptide bond at the C-terminal Gly of UFM1, a ubiquitin-like modifier protein bound to a number of target proteins. Does not hydrolyze SUMO1 or ISG15 ubiquitin-like proteins. This is Probable Ufm1-specific protease 2 from Drosophila pseudoobscura pseudoobscura (Fruit fly).